Reading from the N-terminus, the 375-residue chain is Succinyl-diaminopimelate desuccinylase (375 aa).

H66 is a Zn(2+) binding site. D68 is a catalytic residue. D99 contacts Zn(2+). Residue E130 is the Proton acceptor of the active site. Residues E131, E159, and H345 each coordinate Zn(2+).

It belongs to the peptidase M20A family. DapE subfamily. Homodimer. It depends on Zn(2+) as a cofactor. Co(2+) is required as a cofactor.

The catalysed reaction is N-succinyl-(2S,6S)-2,6-diaminopimelate + H2O = (2S,6S)-2,6-diaminopimelate + succinate. It functions in the pathway amino-acid biosynthesis; L-lysine biosynthesis via DAP pathway; LL-2,6-diaminopimelate from (S)-tetrahydrodipicolinate (succinylase route): step 3/3. In terms of biological role, catalyzes the hydrolysis of N-succinyl-L,L-diaminopimelic acid (SDAP), forming succinate and LL-2,6-diaminopimelate (DAP), an intermediate involved in the bacterial biosynthesis of lysine and meso-diaminopimelic acid, an essential component of bacterial cell walls. The chain is Succinyl-diaminopimelate desuccinylase from Xanthobacter autotrophicus (strain ATCC BAA-1158 / Py2).